A 60-amino-acid polypeptide reads, in one-letter code: Conotoxin Cl1.1 (60 aa).

The signal sequence occupies residues 1–19 (MRCLPVIVILLLLISSAAA). The propeptide occupies 20 to 48 (VVEGPLRVNRRLRPRKAPVDMQARDWNWG).

The protein belongs to the conotoxin T superfamily. In terms of processing, contains 2 disulfide bonds. As to expression, expressed by the venom duct.

The protein localises to the secreted. This chain is Conotoxin Cl1.1, found in Californiconus californicus (California cone).